Reading from the N-terminus, the 344-residue chain is Sulfate/thiosulfate import ATP-binding protein CysA (344 aa).

The 235-residue stretch at 3–237 (IEVRNLVKKF…PATAFVHGFI (235 aa)) folds into the ABC transporter domain. 35 to 42 (GPSGSGKT) contacts ATP.

This sequence belongs to the ABC transporter superfamily. Sulfate/tungstate importer (TC 3.A.1.6) family. As to quaternary structure, the complex is composed of two ATP-binding proteins (CysA), two transmembrane proteins (CysT and CysW) and a solute-binding protein (CysP).

Its subcellular location is the cell inner membrane. It carries out the reaction sulfate(out) + ATP + H2O = sulfate(in) + ADP + phosphate + H(+). The catalysed reaction is thiosulfate(out) + ATP + H2O = thiosulfate(in) + ADP + phosphate + H(+). Its function is as follows. Part of the ABC transporter complex CysAWTP involved in sulfate/thiosulfate import. Responsible for energy coupling to the transport system. The protein is Sulfate/thiosulfate import ATP-binding protein CysA of Bradyrhizobium diazoefficiens (strain JCM 10833 / BCRC 13528 / IAM 13628 / NBRC 14792 / USDA 110).